Here is a 336-residue protein sequence, read N- to C-terminus: Flap endonuclease 1 (336 aa).

The segment at 1–98 (MGADIGDLFE…AEIEERKKRR (98 aa)) is N-domain. The Mg(2+) site is built by Asp-27, Asp-80, Glu-151, Glu-153, Asp-172, Asp-174, and Asp-235. An I-domain region spans residues 115–256 (DAKKYAQAAG…KALNYIKTYG (142 aa)). The interaction with PCNA stretch occupies residues 328 to 336 (TQATLERWF).

It belongs to the XPG/RAD2 endonuclease family. FEN1 subfamily. Interacts with PCNA. PCNA stimulates the nuclease activity without altering cleavage specificity. Requires Mg(2+) as cofactor.

Its function is as follows. Structure-specific nuclease with 5'-flap endonuclease and 5'-3' exonuclease activities involved in DNA replication and repair. During DNA replication, cleaves the 5'-overhanging flap structure that is generated by displacement synthesis when DNA polymerase encounters the 5'-end of a downstream Okazaki fragment. Binds the unpaired 3'-DNA end and kinks the DNA to facilitate 5' cleavage specificity. Cleaves one nucleotide into the double-stranded DNA from the junction in flap DNA, leaving a nick for ligation. Also involved in the base excision repair (BER) pathway. Acts as a genome stabilization factor that prevents flaps from equilibrating into structures that lead to duplications and deletions. Also possesses 5'-3' exonuclease activity on nicked or gapped double-stranded DNA. The sequence is that of Flap endonuclease 1 from Archaeoglobus fulgidus (strain ATCC 49558 / DSM 4304 / JCM 9628 / NBRC 100126 / VC-16).